Consider the following 1009-residue polypeptide: Helicase-like transcription factor (1009 aa).

Arg27 carries the omega-N-methylarginine modification. Residues 38 to 287 (EFQDVIPPDD…FSEKDRPENV (250 aa)) mediate DNA binding. Lys112 participates in a covalent cross-link: Glycyl lysine isopeptide (Lys-Gly) (interchain with G-Cter in SUMO2). At Tyr195 the chain carries Phosphotyrosine; by JAK2. A Glycyl lysine isopeptide (Lys-Gly) (interchain with G-Cter in SUMO2) cross-link involves residue Lys211. 294–301 (DDMGLGKT) is a binding site for ATP. A disordered region spans residues 336–365 (DDSMKLGGNNTSEKADGLSKDASRCSEQPS). The span at 348–359 (EKADGLSKDASR) shows a compositional bias: basic and acidic residues. Phosphoserine is present on residues Ser397, Ser398, and Ser400. A Helicase ATP-binding domain is found at 435–606 (IEDVAFACAL…WSLLSFLKLK (172 aa)). The DEGH box motif lies at 557–560 (DEGH). Thr736 carries the phosphothreonine modification. The RING-type zinc-finger motif lies at 760–801 (CAICLDSLTVPVITHCAHVFCKPCICQVIQNEQPHAKCPLCR). The region spanning 837–996 (ALMHALTDLR…TKKPNADEMK (160 aa)) is the Helicase C-terminal domain. The interaction with SP1 and SP3 stretch occupies residues 925–1009 (SRVFLMDPAW…INEIRTLIDL (85 aa)).

The protein belongs to the SNF2/RAD54 helicase family. RAD16 subfamily. As to quaternary structure, interacts with SP1 and SP3 independently of DNA; the interaction with these transcriptional factors may be required for basal transcription of target genes. Interacts with EGR1; the interaction requires prior binding to DNA and represses c-Rel via a DNA looping mechanism. Interacts with GATA4. Interacts with PCNA; the interaction promotes polyubiquitination of PCNA through association with the UBE2B-RAD18 and UBE2V2-UBE2N ubiquitin ligase complexes. Interacts with RAD18, SHPRH, UBE2V2 and UBE2N. In terms of tissue distribution, expressed in brain, heart, kidney, liver, lung, pancreas, placenta and skeletal muscle.

It is found in the cytoplasm. The protein localises to the nucleus. Its subcellular location is the nucleolus. It localises to the nucleoplasm. The enzyme catalyses S-ubiquitinyl-[E2 ubiquitin-conjugating enzyme]-L-cysteine + [acceptor protein]-L-lysine = [E2 ubiquitin-conjugating enzyme]-L-cysteine + N(6)-ubiquitinyl-[acceptor protein]-L-lysine.. It participates in protein modification; protein ubiquitination. Has both helicase and E3 ubiquitin ligase activities. Possesses intrinsic ATP-dependent nucleosome-remodeling activity; This activity may be required for transcriptional activation or repression of specific target promoters. These may include the SERPINE1 and HIV-1 promoters and the SV40 enhancer, to which this protein can bind directly. Plays a role in error-free postreplication repair (PRR) of damaged DNA and maintains genomic stability through acting as a ubiquitin ligase for 'Lys-63'-linked polyubiquitination of chromatin-bound PCNA. This Homo sapiens (Human) protein is Helicase-like transcription factor (HLTF).